A 634-amino-acid chain; its full sequence is Glutamate--tRNA ligase (634 aa).

A 'HIGH' region motif is present at residues 108–118 (PNPSGPLHIGH).

Belongs to the class-I aminoacyl-tRNA synthetase family. Glutamate--tRNA ligase type 2 subfamily.

The protein localises to the cytoplasm. The catalysed reaction is tRNA(Glu) + L-glutamate + ATP = L-glutamyl-tRNA(Glu) + AMP + diphosphate. Its function is as follows. Catalyzes the attachment of glutamate to tRNA(Glu) in a two-step reaction: glutamate is first activated by ATP to form Glu-AMP and then transferred to the acceptor end of tRNA(Glu). The polypeptide is Glutamate--tRNA ligase (Methanoregula boonei (strain DSM 21154 / JCM 14090 / 6A8)).